Reading from the N-terminus, the 209-residue chain is Transmembrane emp24 domain-containing protein B (209 aa).

The signal sequence occupies residues 1 to 24; that stretch reads MNKTNQLINICILVTLFLIGSSSA. Topologically, residues 25–174 are lumenal; that stretch reads LTLQVEPKSQ…RDTSESTNAR (150 aa). Residues 34-119 form the GOLD domain; the sequence is QECFYNFIES…AKVVTFTWAS (86 aa). Residues 175–195 traverse the membrane as a helical segment; the sequence is VVWWTIAEVIVLVVMGVGQIW. Topologically, residues 196–209 are cytoplasmic; the sequence is YLRKWFDNKSTGRV.

Belongs to the EMP24/GP25L family.

Its subcellular location is the cytoplasmic vesicle membrane. Could have a role in the budding of coatomer-coated and other species of coated vesicles. This chain is Transmembrane emp24 domain-containing protein B (empB), found in Dictyostelium discoideum (Social amoeba).